The sequence spans 249 residues: Adenosylcobinamide-GDP ribazoletransferase (249 aa).

Helical transmembrane passes span 36 to 56 (LVGF…HSIG), 57 to 77 (LNLA…GGLH), 106 to 126 (VGAM…AFLF), 133 to 153 (KLTA…LAIT), 188 to 208 (LWLF…ITWL), and 226 to 246 (GALG…GQQI).

Belongs to the CobS family. Mg(2+) serves as cofactor.

Its subcellular location is the cell membrane. The enzyme catalyses alpha-ribazole + adenosylcob(III)inamide-GDP = adenosylcob(III)alamin + GMP + H(+). It carries out the reaction alpha-ribazole 5'-phosphate + adenosylcob(III)inamide-GDP = adenosylcob(III)alamin 5'-phosphate + GMP + H(+). The protein operates within cofactor biosynthesis; adenosylcobalamin biosynthesis; adenosylcobalamin from cob(II)yrinate a,c-diamide: step 7/7. Its function is as follows. Joins adenosylcobinamide-GDP and alpha-ribazole to generate adenosylcobalamin (Ado-cobalamin). Also synthesizes adenosylcobalamin 5'-phosphate from adenosylcobinamide-GDP and alpha-ribazole 5'-phosphate. The polypeptide is Adenosylcobinamide-GDP ribazoletransferase (Desulforamulus reducens (strain ATCC BAA-1160 / DSM 100696 / MI-1) (Desulfotomaculum reducens)).